A 278-amino-acid chain; its full sequence is HTH-type transcriptional activator RhaS (278 aa).

The 99-residue stretch at 174-272 folds into the HTH araC/xylS-type domain; sequence NHLIAWLEDH…GWSPREIRQG (99 aa). 2 consecutive DNA-binding regions (H-T-H motif) follow at residues 191-212 and 239-262; these read EAIA…KQHT and VTHI…RREF.

As to quaternary structure, binds DNA as a dimer.

The protein localises to the cytoplasm. In terms of biological role, activates expression of the rhaBAD and rhaT operons. The sequence is that of HTH-type transcriptional activator RhaS from Escherichia fergusonii (strain ATCC 35469 / DSM 13698 / CCUG 18766 / IAM 14443 / JCM 21226 / LMG 7866 / NBRC 102419 / NCTC 12128 / CDC 0568-73).